Reading from the N-terminus, the 334-residue chain is Ribosomal RNA small subunit methyltransferase C (334 aa).

The protein belongs to the methyltransferase superfamily. RsmC family. In terms of assembly, monomer.

It localises to the cytoplasm. It carries out the reaction guanosine(1207) in 16S rRNA + S-adenosyl-L-methionine = N(2)-methylguanosine(1207) in 16S rRNA + S-adenosyl-L-homocysteine + H(+). Functionally, specifically methylates the guanine in position 1207 of 16S rRNA in the 30S particle. This is Ribosomal RNA small subunit methyltransferase C from Idiomarina loihiensis (strain ATCC BAA-735 / DSM 15497 / L2-TR).